Here is an 862-residue protein sequence, read N- to C-terminus: MSSSNFNEMNELNMTQTNYGSTKYTAQHHQGVINAIISSLTAPDQPTTVSLQYSNDKNMATEIQAYAKLSGPNWTYYVKDLEVSIGRNTDPLNSALQENSDGVKNSYRVNIDLGPAKVVSRKHAIIKYNMNIGGWELHILGRNGAKVNFQRTHNGPNNPPIRLSSGTLLDIGGTQMMFILPDSDPVVAPICIEHLMPNLINMFGLEGNNNPLLRDIIKQSNYAKQRQLTSNQQIKGFKLYGSGGNAPFGSGANLGPSEQGIFNNNNNSKNKNGYFTSINPNYTASTTTSNTINPQAASPQGPPNTIIAANFVDSYKSSNAYPQALDFTSDLSHDENRNVKPPHSYATMITQAILSSPEGVISLADIYKYISSNYAYYRFAKSGWQNSIRHNLSLNKAFEKVPRRPNEPGKGMKWRISESYQQEFLNKWNTGKVGKIRRGSSVARQLQLHMAKFNSLPMEMDYRLSLNMAQPPKRQLQSHNVLEPSNNNIIEGFVQHVPSKGNLPASQQSQPPVSHQNQSQQPPPQEQRQEIQFTFADTQNRNIALARPIKTPQLQAPNSNANLNQNNMKEYKESLHPPAISISQMNRQSPNNALVSFTNACANSKIINNISDSADKSTNNNGGTKMNLPAISTSSLDENGNLEPTTTTSSGNSNSVPQTGTTTSSLAANSLRLSQPYDTLLRSPTKAFHITAMEAYTPERGSANRARSPLHSNSNNTNNNGANNSNLQTSGMENKQTGLVLDSNVLKSMESNNDNRRLTPSTSKSQNVKSSPGVWNLLQFSSTNNTPAADSGGNKRGFSINPDIKAKENENATSEKDSDSNSNDLETKDINSSPLKNQGGSTANAKELILDTDGAKISIINN.

Residues 83 to 152 (VSIGRNTDPL…NGAKVNFQRT (70 aa)) enclose the FHA domain. Residues 339 to 430 (VKPPHSYATM…QQEFLNKWNT (92 aa)) constitute a DNA-binding region (fork-head). 4 disordered regions span residues 498 to 528 (PSKG…QEQR), 611 to 663 (SDSA…GTTT), 698 to 730 (PERG…LQTS), and 750 to 846 (ESNN…ANAK). Over residues 504–520 (PASQQSQPPVSHQNQSQ) the composition is skewed to low complexity. Positions 611–644 (SDSADKSTNNNGGTKMNLPAISTSSLDENGNLEP) are enriched in polar residues. Low complexity predominate over residues 645–655 (TTTTSSGNSNS). Serine 708 carries the phosphoserine modification. Residues 712–726 (SNSNNTNNNGANNSN) show a composition bias toward low complexity. 2 stretches are compositionally biased toward polar residues: residues 750–770 (ESNN…NVKS) and 778–788 (LQFSSTNNTPA). The segment covering 804-829 (IKAKENENATSEKDSDSNSNDLETKD) has biased composition (basic and acidic residues). Residues 830–844 (INSSPLKNQGGSTAN) are compositionally biased toward polar residues. 2 positions are modified to phosphoserine: serine 832 and serine 833.

As to quaternary structure, interacts with MCM1. Interacts with NDD1. Interacts with the origin recognition complex (ORC) composed of ORC1 to ORC6.

Its subcellular location is the nucleus. It is found in the cytoplasm. It localises to the cytosol. Functionally, transcription factor that regulates the expression of the CLB2 cluster of genes during the G2/M phase of the mitotic cell cycle. The CLB2 cluster of genes includes mitotic regulators such as CLB1, CLB2, CDC5 and CDC20 as well as SWI5 and ACE2, transcription factors required for the subsequent temporal wave of cell cycle regulated gene expression in the M/G1 phase interval. Involved in HMRa silencing. FKH1 and FKH2 associate with the coding regions of active genes and influence, in opposing ways, transcriptional elongation and termination, and coordinate early transcription elongation and pre-mRNA processing. Both FKH1 and FKH2 play a role as regulators of lifespan in collaboration with the anaphase-promoting complex (APC), likely through combined regulation of stress response, genomic stability, and cell cycle regulation. FKH1 and FKH2 function also in controlling yeast cell morphology by preventing preudohyphal growth. Acts as a rate-limiting replication origin activator via its interaction with the origin recognition complex (ORC). In Saccharomyces cerevisiae (strain ATCC 204508 / S288c) (Baker's yeast), this protein is Fork head protein homolog 2.